A 118-amino-acid chain; its full sequence is DNA-binding protein inhibitor ID-3-A (118 aa).

In terms of domain architecture, bHLH spans 32 to 84 (SHKGPGMDEPMGLLYDMNGCYSKLKELVPGIPQGSKLSQVEILQHVIDYIFDL).

As to quaternary structure, homodimer. Heterodimer with other HLH proteins. Interacts (via HLH domain) with the bHLH protein hes4/hairy2 (via Orange domain). Interacts with stat3. In terms of tissue distribution, at gastrula stage, expressed in all three germ layers, but becomes localized to discrete domains of the developing nervous system during neurulation, including the anterior neural plate, cement gland, eye anlagen, otic placode and both cranial and trunk premigratory and early migratory neural crest cells. Also expressed in the most dorsal and ventral portions of the myotome, the developing heart and anterior blood islets, and in the tail fin mesenchyme. Expressed at a low level in limbs, with expression decreasing as limbs develop, but expressed at a high level in blastemas (regenerated limbs), where expression is localized to both the blastermal epidermis and mesenchyme. Widely expressed in adults including the liver and heart.

It localises to the nucleus. In terms of biological role, transcriptional regulator (lacking a basic DNA binding domain) which negatively regulates the basic helix-loop-helix (bHLH) transcription factors by forming heterodimers and inhibiting their DNA binding and transcriptional activity. Influences cell fate decisions in the embryo by sequestering and blocking the activity of the bHLH transcription factors that control these decisions. Inhibits the binding of myogenic bHLH-containing complexes to E-box DNA, thereby preventing activation of muscle-specific target genes. Also inhibits the activity of neurogenic factor neurod1/neuroD. Plays a role in cell cycle progression and survival of neural crest progenitors; binding to either hes4-B/hairy2b or stat3 blocks the formation of transcription factor complexes and the repressor function of hes4-B/hairy2B, to allow neural crest progenitors to differentiate. May play a role in the regulation of the circadian rhythm. The chain is DNA-binding protein inhibitor ID-3-A (id3-a) from Xenopus laevis (African clawed frog).